We begin with the raw amino-acid sequence, 196 residues long: MKIGVLGLQGAVREHVRAIEACGAEAVIVKKSEQLEGLDGLVLPGGESTTXRRLIDRYGLXEPLKQFAAAGKPXFGTCAGLILLAKRIVGYDEPHLGLXDITVERNSFGRQRESFEAELSIKGVGDGFVGVFIRAPHIVEAGDGVDVLATYNDRIVAARQGQFLGCSFHPELTDDHRLXQYFLNXVKEAKXASSLK.

46 to 48 contributes to the L-glutamine binding site; the sequence is GES. C78 serves as the catalytic Nucleophile. L-glutamine is bound by residues R105 and 133 to 134; that span reads IR. Residues H169 and E171 each act as charge relay system in the active site.

Belongs to the glutaminase PdxT/SNO family. In the presence of PdxS, forms a dodecamer of heterodimers. Only shows activity in the heterodimer.

It catalyses the reaction aldehydo-D-ribose 5-phosphate + D-glyceraldehyde 3-phosphate + L-glutamine = pyridoxal 5'-phosphate + L-glutamate + phosphate + 3 H2O + H(+). The catalysed reaction is L-glutamine + H2O = L-glutamate + NH4(+). The protein operates within cofactor biosynthesis; pyridoxal 5'-phosphate biosynthesis. Its function is as follows. Catalyzes the hydrolysis of glutamine to glutamate and ammonia as part of the biosynthesis of pyridoxal 5'-phosphate. The resulting ammonia molecule is channeled to the active site of PdxS. The chain is Pyridoxal 5'-phosphate synthase subunit PdxT from Geobacillus stearothermophilus (Bacillus stearothermophilus).